A 545-amino-acid chain; its full sequence is Chaperonin GroEL (545 aa).

ATP contacts are provided by residues 29-32, lysine 50, 86-90, glycine 414, 477-479, and aspartate 493; these read TMGP, DGTTT, and NAA.

This sequence belongs to the chaperonin (HSP60) family. Forms a cylinder of 14 subunits composed of two heptameric rings stacked back-to-back. Interacts with the co-chaperonin GroES.

It is found in the cytoplasm. It carries out the reaction ATP + H2O + a folded polypeptide = ADP + phosphate + an unfolded polypeptide.. Functionally, together with its co-chaperonin GroES, plays an essential role in assisting protein folding. The GroEL-GroES system forms a nano-cage that allows encapsulation of the non-native substrate proteins and provides a physical environment optimized to promote and accelerate protein folding. The sequence is that of Chaperonin GroEL from Campylobacter fetus subsp. fetus (strain 82-40).